Reading from the N-terminus, the 327-residue chain is Transaldolase (327 aa).

The Schiff-base intermediate with substrate role is filled by K132.

The protein belongs to the transaldolase family. Type 1 subfamily.

It localises to the cytoplasm. The enzyme catalyses D-sedoheptulose 7-phosphate + D-glyceraldehyde 3-phosphate = D-erythrose 4-phosphate + beta-D-fructose 6-phosphate. It functions in the pathway carbohydrate degradation; pentose phosphate pathway; D-glyceraldehyde 3-phosphate and beta-D-fructose 6-phosphate from D-ribose 5-phosphate and D-xylulose 5-phosphate (non-oxidative stage): step 2/3. In terms of biological role, transaldolase is important for the balance of metabolites in the pentose-phosphate pathway. The chain is Transaldolase from Chlamydia pneumoniae (Chlamydophila pneumoniae).